Reading from the N-terminus, the 98-residue chain is Acylphosphatase (98 aa).

One can recognise an Acylphosphatase-like domain in the interval 12–98 (TYYVRVRGVV…DKRFERFQQH (87 aa)). Catalysis depends on residues Arg27 and Asn45.

It belongs to the acylphosphatase family.

It carries out the reaction an acyl phosphate + H2O = a carboxylate + phosphate + H(+). The chain is Acylphosphatase (acyP) from Burkholderia thailandensis (strain ATCC 700388 / DSM 13276 / CCUG 48851 / CIP 106301 / E264).